We begin with the raw amino-acid sequence, 280 residues long: Protein phosphatase 1 regulatory subunit 3B-A (280 aa).

A PP1-binding motif motif is present at residues 58 to 61; the sequence is RVSF. Residues 121–229 enclose the CBM21 domain; that stretch reads RNRLQADSVC…SNKSLNYKIA (109 aa).

In terms of assembly, interacts with glycogen, PPP1CC catalytic subunit of PP1 and PYGL. Associates with glycogen particles. Forms complexes with debranching enzyme, glycogen phosphorylase, glycogen synthase and phosphorylase kinase which is necessary for its regulation of PP1 activity.

Functionally, acts as a glycogen-targeting subunit for phosphatase PP1. Facilitates interaction of the PP1 with enzymes of the glycogen metabolism and regulates its activity. Suppresses the rate at which PP1 dephosphorylates (inactivates) glycogen phosphorylase and enhances the rate at which it activates glycogen synthase and therefore limits glycogen breakdown. In Xenopus laevis (African clawed frog), this protein is Protein phosphatase 1 regulatory subunit 3B-A (ppp1r3b-a).